A 446-amino-acid polypeptide reads, in one-letter code: MIIRRLFSISNRSFFLKKPQFDVKKIIEMIPQYQTSIQNRELIEADSIIRSLQLLGERYQNIKEIDKVIADIQIQRKSIEAQIKKDKTKITEYSAALKALKEQYNDQNSKSSELKKKILETCKSLPNTLDPTVPLDAPQIEQWINPLKTHKTSEAQAHVDIMLKKNMLDLQTASNVTGMSWYYLLNDGARLEQALVAYALKKANENGFSSCVPPSITKKELIDACGFNPRDMNNERQIYALQDTNLGLVATAEIPLAGLGANKVLELNSGECSKKLVGVSRCYRAEAGARGKDTKGLYRVHEFTKVELFCWSKPETSAKVLEEIKQFQISVVEELGIPAKVLNMPSNDLGNPAFKKYDIEAWMPGRGKFGEISSASNCTDFQSRRLNTKYRDDNTGKLEYVHTLNGTAMAIPRVIVALVENFYDPSTGKISVPECLREFMNGQRYI.

251–253 (TAE) provides a ligand contact to L-serine. Residues 284-286 (RAE) and valine 300 each bind ATP. Residue glutamate 307 coordinates L-serine. 371 to 374 (EISS) contacts ATP. Residue threonine 407 coordinates L-serine.

This sequence belongs to the class-II aminoacyl-tRNA synthetase family. Type-1 seryl-tRNA synthetase subfamily. As to quaternary structure, homodimer. The tRNA molecule binds across the dimer.

It localises to the mitochondrion matrix. It catalyses the reaction tRNA(Ser) + L-serine + ATP = L-seryl-tRNA(Ser) + AMP + diphosphate + H(+). Its function is as follows. Catalyzes the attachment of serine to tRNA(Ser). The chain is Serine--tRNA ligase, mitochondrial (DIA4) from Saccharomyces cerevisiae (strain ATCC 204508 / S288c) (Baker's yeast).